We begin with the raw amino-acid sequence, 793 residues long: MSRRRQNDEEDEIQMKRRRGAPLIGDVEKKLQEVIGKVGDKNTGSSIEANLEKLTAFLHDDLEKYRSSIIDIVAGCAIYLPNRVTVYTTLVGLLNAKNFNFGGDVVEKLIAEQQDLLLKQKYQEAQNLAIFLCDLGNSGVLTAQSIGEYLESFIAAAFEENMPQVRNDYYIQTVLRCLPWIGKELTEKAQEQMENIVEAVGKYLEMRNKNHVPLLRVWREGSTDQEQEDYLESLSAQIENLRTANWMQNHIPRYYNTFEAVLQDALQHNLPSFSSPEHTSDMIYPYPLVVFRLFQDADCGTDSQLPSGHSIDRFLFEGEISWIIEKNQFNRKSCARELLAFADENPTAPVGFLIFETIFGQMLRLPHAPYPAIFHCSLVLELLKLKPNDYPNILCKTVDLIFSRADSMQPICIDRMVDWFSFHLSNFQYRYTWDEWKDCISNDEFSGRQVFLREVIEKCRRLGSYEKIIAALPSDFVKIHPASPEIRYLLDEEDAMSQRAETFTQMFQERQPADAFLKELKSTDENDELPYNINEFGVFVTVMLKMASKTYSHNFSALFRYKDTLKTVCDAAEQYQEKLLETLYSCWKSNQQMLMILTDKLLKMQIIDCSSVVGWLFDEKMWQEHNRQWLFEVLNQALEKLTRQINVVEKDIKDLTEKVESKEKVTEAGDVKMEEETVVDEKLKGEMEELENHKEKLDRMVSFQRNLFNDFLIAFVEEIKSAATNTSEMDGSGDVGGSESSKFLWLRGRFCHVLLAHAETLLKHSSSIAEEVFSEGADPNISECFNQFQSLRF.

Residues 28–242 (EKKLQEVIGK…SLSAQIENLR (215 aa)) form the MIF4G domain.

This sequence belongs to the NCBP1 family. As to quaternary structure, component of the nuclear cap-binding complex (CBC), a heterodimer composed of ncbp-1 and ncbp-1 that interacts with m7GpppG-capped RNA.

Its subcellular location is the nucleus. Its function is as follows. Component of the cap-binding complex (CBC), which binds cotranscriptionally to the 5'-cap of pre-mRNAs and is involved in various processes such as pre-mRNA splicing and RNA-mediated gene silencing (RNAi). The CBC complex is involved in miRNA-mediated RNA interference and is required for primary microRNAs (miRNAs) processing. In the CBC complex, ncbp-1 does not bind directly capped RNAs (m7GpppG-capped RNA) but is required to stabilize the movement of the N-terminal loop of ncbp-2 and lock the CBC into a high affinity cap-binding state with the cap structure. The polypeptide is Nuclear cap-binding protein subunit 1 (ncbp-1) (Caenorhabditis briggsae).